A 215-amino-acid polypeptide reads, in one-letter code: Fibroblast growth factor 17 (215 aa).

The N-terminal stretch at 1–22 (MYGINQRYLYISFHFFVVWCHA) is a signal peptide. The N-linked (GlcNAc...) asparagine glycan is linked to Asn137.

This sequence belongs to the heparin-binding growth factors family.

Its subcellular location is the secreted. Functionally, involved in dorsal-ventral embryonic patterning, by promoting expression of bone morphogenetic protein (BMP) antagonists such as chd. Also involved in anterior-posterior neural patterning and in mesoderm induction. The polypeptide is Fibroblast growth factor 17 (fgf17) (Danio rerio (Zebrafish)).